Reading from the N-terminus, the 236-residue chain is Small ribosomal subunit protein uS2c (236 aa).

Belongs to the universal ribosomal protein uS2 family.

The protein localises to the plastid. It localises to the chloroplast. This Oryza nivara (Indian wild rice) protein is Small ribosomal subunit protein uS2c (rps2).